We begin with the raw amino-acid sequence, 491 residues long: Equilibrative nucleobase transporter 1 (491 aa).

Residues leucine 17 to phenylalanine 37 traverse the membrane as a helical segment. The N-linked (GlcNAc...) asparagine glycan is linked to asparagine 56. Transmembrane regions (helical) follow at residues leucine 72–phenylalanine 92, leucine 102–serine 122, alanine 123–threonine 143, serine 156–isoleucine 176, and alanine 188–methionine 208. N-linked (GlcNAc...) asparagine glycans are attached at residues asparagine 220 and asparagine 229. Serine 253 bears the Phosphoserine mark. Phosphothreonine is present on threonine 258. 6 helical membrane-spanning segments follow: residues phenylalanine 279 to threonine 299, threonine 319 to methionine 339, serine 356 to cysteine 376, isoleucine 396 to proline 418, glycine 427 to isoleucine 447, and phenylalanine 456 to valine 476.

Belongs to the SLC43A transporter (TC 2.A.1.44) family. Widely expressed with highest levels in the liver and lung, followed by the pancreas. Highly expressed in macrophages.

Its subcellular location is the basolateral cell membrane. It catalyses the reaction adenine(out) = adenine(in). The catalysed reaction is guanine(out) = guanine(in). It carries out the reaction hypoxanthine(out) = hypoxanthine(in). Its activity is regulated as follows. Adenine transport is strongly inhibited by decynium-22. With respect to regulation, 6-mercaptopurine-transport is inhibited by 6-thioguanine, 6-methylmercaptopurine and decynium-22. Functionally, sodium-independent purine-selective nucleobase transporter which mediates the equilibrative transport of extracellular purine nucleobases such as adenine, guanine and hypoxanthine. May regulate fatty acid (FA) transport in adipocytes, acting as a positive regulator of FA efflux and as a negative regulator of FA uptake. Sodium-independent purine-selective nucleobase transporter which mediates the equilibrative transport of extracellular purine nucleobase adenine. Mediates the influx and efflux of the purine nucleobase analog drug 6-mercaptopurine across the membrane. This is Equilibrative nucleobase transporter 1 (SLC43A3) from Homo sapiens (Human).